The sequence spans 512 residues: GMP synthase [glutamine-hydrolyzing] (512 aa).

The Glutamine amidotransferase type-1 domain occupies 5-195 (GIVILDFGSQ…IFGIAKAEKN (191 aa)). Catalysis depends on cysteine 82, which acts as the Nucleophile. Catalysis depends on residues histidine 169 and glutamate 171. Residues 196 to 387 (WSMENYIEST…LGIPDYMVDR (192 aa)) form the GMPS ATP-PPase domain. Position 223–229 (223–229 (SGGVDSS)) interacts with ATP.

As to quaternary structure, homodimer.

The enzyme catalyses XMP + L-glutamine + ATP + H2O = GMP + L-glutamate + AMP + diphosphate + 2 H(+). It functions in the pathway purine metabolism; GMP biosynthesis; GMP from XMP (L-Gln route): step 1/1. Its function is as follows. Catalyzes the synthesis of GMP from XMP. The polypeptide is GMP synthase [glutamine-hydrolyzing] (Fusobacterium nucleatum subsp. nucleatum (strain ATCC 25586 / DSM 15643 / BCRC 10681 / CIP 101130 / JCM 8532 / KCTC 2640 / LMG 13131 / VPI 4355)).